The sequence spans 279 residues: 3-methyl-2-oxobutanoate hydroxymethyltransferase (279 aa).

Mg(2+) contacts are provided by aspartate 44 and aspartate 83. Residues 44–45 (DS), aspartate 83, and lysine 113 each bind 3-methyl-2-oxobutanoate. Position 115 (glutamate 115) interacts with Mg(2+). Glutamate 182 acts as the Proton acceptor in catalysis.

Belongs to the PanB family. As to quaternary structure, homodecamer; pentamer of dimers. Mg(2+) serves as cofactor.

It localises to the cytoplasm. The catalysed reaction is 3-methyl-2-oxobutanoate + (6R)-5,10-methylene-5,6,7,8-tetrahydrofolate + H2O = 2-dehydropantoate + (6S)-5,6,7,8-tetrahydrofolate. It participates in cofactor biosynthesis; (R)-pantothenate biosynthesis; (R)-pantoate from 3-methyl-2-oxobutanoate: step 1/2. Functionally, catalyzes the reversible reaction in which hydroxymethyl group from 5,10-methylenetetrahydrofolate is transferred onto alpha-ketoisovalerate to form ketopantoate. This chain is 3-methyl-2-oxobutanoate hydroxymethyltransferase, found in Dehalococcoides mccartyi (strain ATCC BAA-2100 / JCM 16839 / KCTC 5957 / BAV1).